The chain runs to 207 residues: Large ribosomal subunit protein uL4 (207 aa).

Residues 49 to 78 (HAVKNRSAVSGGGRKPWRQKGTGRARQGSI) are disordered.

This sequence belongs to the universal ribosomal protein uL4 family. As to quaternary structure, part of the 50S ribosomal subunit.

Its function is as follows. One of the primary rRNA binding proteins, this protein initially binds near the 5'-end of the 23S rRNA. It is important during the early stages of 50S assembly. It makes multiple contacts with different domains of the 23S rRNA in the assembled 50S subunit and ribosome. Forms part of the polypeptide exit tunnel. This chain is Large ribosomal subunit protein uL4, found in Streptococcus gordonii (strain Challis / ATCC 35105 / BCRC 15272 / CH1 / DL1 / V288).